A 200-amino-acid polypeptide reads, in one-letter code: Holliday junction branch migration complex subunit RuvA (200 aa).

The domain I stretch occupies residues 1 to 64; the sequence is MIAKLKGLLD…ENDMRLLGFA (64 aa). A domain II region spans residues 65–143; that stretch reads EASERDWFRL…ALPSAPGGAA (79 aa). A flexible linker region spans residues 144-154; the sequence is MAANPAGGASA. Positions 154-200 are domain III; sequence ADAVSALENLGFKPAIAARAVATAQGELGEGASESELIRVALKRAAG.

It belongs to the RuvA family. Homotetramer. Forms an RuvA(8)-RuvB(12)-Holliday junction (HJ) complex. HJ DNA is sandwiched between 2 RuvA tetramers; dsDNA enters through RuvA and exits via RuvB. An RuvB hexamer assembles on each DNA strand where it exits the tetramer. Each RuvB hexamer is contacted by two RuvA subunits (via domain III) on 2 adjacent RuvB subunits; this complex drives branch migration. In the full resolvosome a probable DNA-RuvA(4)-RuvB(12)-RuvC(2) complex forms which resolves the HJ.

It localises to the cytoplasm. Its function is as follows. The RuvA-RuvB-RuvC complex processes Holliday junction (HJ) DNA during genetic recombination and DNA repair, while the RuvA-RuvB complex plays an important role in the rescue of blocked DNA replication forks via replication fork reversal (RFR). RuvA specifically binds to HJ cruciform DNA, conferring on it an open structure. The RuvB hexamer acts as an ATP-dependent pump, pulling dsDNA into and through the RuvAB complex. HJ branch migration allows RuvC to scan DNA until it finds its consensus sequence, where it cleaves and resolves the cruciform DNA. The polypeptide is Holliday junction branch migration complex subunit RuvA (Erythrobacter litoralis (strain HTCC2594)).